Reading from the N-terminus, the 547-residue chain is Carboxypeptidase N subunit 2 (547 aa).

Residues 1–21 (MFPGAWLCWVSLLLLARLTQP) form the signal peptide. One can recognise an LRRNT domain in the interval 22–49 (CPVGCDCFGREVFCSDEQLADIPPDIPP). N-linked (GlcNAc...) asparagine glycosylation is found at N74, N111, and N119. LRR repeat units follow at residues 98–119 (RLQD…IFSN), 122–143 (SLEK…LFCH), 146–167 (ILES…LFQS), 170–191 (DLRT…AFQS), 194–215 (GLQM…ALGS), 218–239 (SLQE…LFSQ), 242–263 (SLEM…LFSS), 266–287 (NLTF…LFAH), 290–311 (GLLH…AFTN), 314–335 (RLVS…VFRN), 338–359 (QLVK…LFHN), and 362–383 (RLQL…IFDT). 2 N-linked (GlcNAc...) asparagine glycosylation sites follow: N266 and N311. Residues N348, N359, and N367 are each glycosylated (N-linked (GlcNAc...) asparagine). One can recognise an LRRCT domain in the interval 395–447 (NPWQCDCHLSYLTSWLRLYNNQISNTHTFCAGPAYLKGQLVPNLKQEQLICPV). N520 carries N-linked (GlcNAc...) asparagine glycosylation.

Tetramer of two catalytic chains and two glycosylated inactive chains.

Its subcellular location is the secreted. Functionally, the 83 kDa subunit binds and stabilizes the catalytic subunit at 37 degrees Celsius and keeps it in circulation. Under some circumstances it may be an allosteric modifier of the catalytic subunit. In Mus musculus (Mouse), this protein is Carboxypeptidase N subunit 2 (Cpn2).